The primary structure comprises 134 residues: Large-conductance mechanosensitive channel (134 aa).

Helical transmembrane passes span 16-36 and 81-101; these read VIDLAVAVVIGAAFGKIVTAL and GDFLNTILQFIIIAFAIFIIV.

Belongs to the MscL family. Homopentamer.

The protein resides in the cell inner membrane. Channel that opens in response to stretch forces in the membrane lipid bilayer. May participate in the regulation of osmotic pressure changes within the cell. The protein is Large-conductance mechanosensitive channel of Xylella fastidiosa (strain 9a5c).